Reading from the N-terminus, the 289-residue chain is 4-diphosphocytidyl-2-C-methyl-D-erythritol kinase (289 aa).

Lysine 10 is a catalytic residue. 94–104 (PVAAGLAGGSS) lines the ATP pocket. Residue aspartate 136 is part of the active site.

The protein belongs to the GHMP kinase family. IspE subfamily.

It catalyses the reaction 4-CDP-2-C-methyl-D-erythritol + ATP = 4-CDP-2-C-methyl-D-erythritol 2-phosphate + ADP + H(+). It participates in isoprenoid biosynthesis; isopentenyl diphosphate biosynthesis via DXP pathway; isopentenyl diphosphate from 1-deoxy-D-xylulose 5-phosphate: step 3/6. Its function is as follows. Catalyzes the phosphorylation of the position 2 hydroxy group of 4-diphosphocytidyl-2C-methyl-D-erythritol. The chain is 4-diphosphocytidyl-2-C-methyl-D-erythritol kinase from Bacillus cytotoxicus (strain DSM 22905 / CIP 110041 / 391-98 / NVH 391-98).